The primary structure comprises 84 residues: Small ribosomal subunit protein uS17 (84 aa).

It belongs to the universal ribosomal protein uS17 family. In terms of assembly, part of the 30S ribosomal subunit.

In terms of biological role, one of the primary rRNA binding proteins, it binds specifically to the 5'-end of 16S ribosomal RNA. This Ureaplasma parvum serovar 3 (strain ATCC 27815 / 27 / NCTC 11736) protein is Small ribosomal subunit protein uS17.